Reading from the N-terminus, the 534-residue chain is Bifunctional pantoate ligase/cytidylate kinase (534 aa).

The interval 1–302 (MRLLTTVAAL…LGSTRLIDNT (302 aa)) is pantoate--beta-alanine ligase. 48-55 (MGSLHQGH) is a binding site for ATP. Residue His-55 is the Proton donor of the active site. Gln-79 contributes to the (R)-pantoate binding site. Gln-79 is a beta-alanine binding site. Residue 172–175 (GQKD) coordinates ATP. Gln-178 contributes to the (R)-pantoate binding site. ATP is bound by residues Val-201 and 209 to 212 (CSSR). The cytidylate kinase stretch occupies residues 303–534 (ILRDRQPIIA…DYYQQRLSQW (232 aa)).

It in the N-terminal section; belongs to the pantothenate synthetase family. This sequence in the C-terminal section; belongs to the cytidylate kinase family. Type 1 subfamily.

The protein resides in the cytoplasm. The catalysed reaction is (R)-pantoate + beta-alanine + ATP = (R)-pantothenate + AMP + diphosphate + H(+). The enzyme catalyses CMP + ATP = CDP + ADP. It catalyses the reaction dCMP + ATP = dCDP + ADP. It participates in cofactor biosynthesis; (R)-pantothenate biosynthesis; (R)-pantothenate from (R)-pantoate and beta-alanine: step 1/1. Functionally, catalyzes the condensation of pantoate with beta-alanine in an ATP-dependent reaction via a pantoyl-adenylate intermediate. Its function is as follows. Catalyzes the transfer of a phosphate group from ATP to either CMP or dCMP to form CDP or dCDP and ADP, respectively. This chain is Bifunctional pantoate ligase/cytidylate kinase, found in Trichormus variabilis (strain ATCC 29413 / PCC 7937) (Anabaena variabilis).